The sequence spans 700 residues: Tectonic-2 (700 aa).

The N-terminal stretch at 1–25 (MGSLSPLSLLWGLLLLQGVLRPLRG) is a signal peptide. Topologically, residues 26-665 (DPVFIPPFIR…YYQGEPQSQC (640 aa)) are extracellular. Residues Asn-76, Asn-82, Asn-146, Asn-156, and Asn-389 are each glycosylated (N-linked (GlcNAc...) asparagine). A helical transmembrane segment spans residues 666-682 (VAKGLMLLSLLMLAILL). The Cytoplasmic portion of the chain corresponds to 683-700 (RHPWVRMCKARDSAAIYH).

This sequence belongs to the tectonic family. In terms of assembly, part of the tectonic-like complex (also named B9 complex). As to expression, significant expression is observed in brain, kidney and eye.

It localises to the membrane. It is found in the cytoplasm. The protein resides in the cytoskeleton. The protein localises to the cilium basal body. Its function is as follows. Component of the tectonic-like complex, a complex localized at the transition zone of primary cilia and acting as a barrier that prevents diffusion of transmembrane proteins between the cilia and plasma membranes. Required for hedgehog signaling transduction. The polypeptide is Tectonic-2 (Tctn2) (Mus musculus (Mouse)).